Reading from the N-terminus, the 261-residue chain is Receptor expression-enhancing protein 4 (261 aa).

2 helical membrane-spanning segments follow: residues 1-21 and 35-55; these read MVSW…YPAY and YVRW…ETFT. Residues 177–261 are disordered; the sequence is ELHRRPIGYP…KKPAQSEPEN (85 aa). Residues 191 to 202 show a composition bias toward basic and acidic residues; the sequence is ADSDSMDERWSD.

Belongs to the DP1 family. As to quaternary structure, interacts with microtubules. In terms of tissue distribution, during gastrulation, expressed on the dorsal side of the embryo and then in the neural plate and neural tube. At tailbud stages, expressed in the somites. Expressed in the neural tube later in development.

The protein resides in the endoplasmic reticulum membrane. Microtubule-binding protein required to ensure proper cell division and nuclear envelope reassembly by sequestering the endoplasmic reticulum away from chromosomes during mitosis. Probably acts by clearing the endoplasmic reticulum membrane from metaphase chromosomes. May play a role in the maintenance of both the nervous system and the musculature. This is Receptor expression-enhancing protein 4 (reep4) from Xenopus tropicalis (Western clawed frog).